The chain runs to 490 residues: Cysteine--tRNA ligase (490 aa).

Cysteine 31 serves as a coordination point for Zn(2+). The short motif at 33–43 (PTVYGDAHLGH) is the 'HIGH' region element. The Zn(2+) site is built by cysteine 226, histidine 251, and glutamate 255. Positions 283-287 (KMGKS) match the 'KMSKS' region motif. An ATP-binding site is contributed by lysine 286.

It belongs to the class-I aminoacyl-tRNA synthetase family. Monomer. The cofactor is Zn(2+).

It localises to the cytoplasm. The catalysed reaction is tRNA(Cys) + L-cysteine + ATP = L-cysteinyl-tRNA(Cys) + AMP + diphosphate. In Porphyromonas gingivalis (strain ATCC BAA-308 / W83), this protein is Cysteine--tRNA ligase.